Reading from the N-terminus, the 412-residue chain is Serine hydroxymethyltransferase (412 aa).

(6S)-5,6,7,8-tetrahydrofolate contacts are provided by residues Leu-117 and 121 to 123; that span reads GHL. Residue Lys-226 is modified to N6-(pyridoxal phosphate)lysine.

The protein belongs to the SHMT family. As to quaternary structure, homodimer. Pyridoxal 5'-phosphate serves as cofactor.

Its subcellular location is the cytoplasm. It carries out the reaction (6R)-5,10-methylene-5,6,7,8-tetrahydrofolate + glycine + H2O = (6S)-5,6,7,8-tetrahydrofolate + L-serine. The protein operates within one-carbon metabolism; tetrahydrofolate interconversion. Its pathway is amino-acid biosynthesis; glycine biosynthesis; glycine from L-serine: step 1/1. In terms of biological role, catalyzes the reversible interconversion of serine and glycine with tetrahydrofolate (THF) serving as the one-carbon carrier. This reaction serves as the major source of one-carbon groups required for the biosynthesis of purines, thymidylate, methionine, and other important biomolecules. Also exhibits THF-independent aldolase activity toward beta-hydroxyamino acids, producing glycine and aldehydes, via a retro-aldol mechanism. In Staphylococcus aureus (strain bovine RF122 / ET3-1), this protein is Serine hydroxymethyltransferase.